A 185-amino-acid chain; its full sequence is MADSHGNAKGATAHTEAGGGHKAPFPPFQKDTFASQLVSLTIAFVALYLISSRLALPRVRKTIDDRQNKIEGDIAQAQTLKNESDAALKAYEVELAAARTRAQAIGNETREKLNAEADTERKALEKRLSAKLADAEKTIASTRTAAMSNVRGIASDAATAIVQQLTGAMPDRKLVDSAVEASMKG.

Residues 1–24 are disordered; the sequence is MADSHGNAKGATAHTEAGGGHKAP. A helical membrane pass occupies residues 34–56; the sequence is ASQLVSLTIAFVALYLISSRLAL.

It belongs to the ATPase B chain family. F-type ATPases have 2 components, F(1) - the catalytic core - and F(0) - the membrane proton channel. F(1) has five subunits: alpha(3), beta(3), gamma(1), delta(1), epsilon(1). F(0) has three main subunits: a(1), b(2) and c(10-14). The alpha and beta chains form an alternating ring which encloses part of the gamma chain. F(1) is attached to F(0) by a central stalk formed by the gamma and epsilon chains, while a peripheral stalk is formed by the delta and b chains.

Its subcellular location is the cell inner membrane. In terms of biological role, f(1)F(0) ATP synthase produces ATP from ADP in the presence of a proton or sodium gradient. F-type ATPases consist of two structural domains, F(1) containing the extramembraneous catalytic core and F(0) containing the membrane proton channel, linked together by a central stalk and a peripheral stalk. During catalysis, ATP synthesis in the catalytic domain of F(1) is coupled via a rotary mechanism of the central stalk subunits to proton translocation. Component of the F(0) channel, it forms part of the peripheral stalk, linking F(1) to F(0). The b'-subunit is a diverged and duplicated form of b found in plants and photosynthetic bacteria. The sequence is that of ATP synthase subunit b 2 (atpF2) from Nitrobacter hamburgensis (strain DSM 10229 / NCIMB 13809 / X14).